We begin with the raw amino-acid sequence, 334 residues long: MEKNPQALVDGFNRKVDYLRMSVTDRCDFRCVYCMAEDMQFLPRQQILSLEELYQVAERFVALGTRKIRLTGGEPLVRQGIVELCGRIAALPGLRELCLTSNGSQLGRLAQPLFDAGVSRLNISLDSLDPERFRALTRTGDLKQVIAGIDAARAAGFRRTKLNAVVLKGRNDDEIVDLVRFAIDRELDISFIEEMPLGVISEHERGESFCSSDDVRNRLAEHFTLVESAESSQGPARYWRLAEAPSTRVGFISPHSHNFCATCNRVRLTVEGRLLLCLGNEHSVDLKQVLRQHPGDSARLEKAIRDAMQLKPYRHHFEVGGEVQILRFMNMTGG.

The region spanning 11 to 235 (GFNRKVDYLR…VESAESSQGP (225 aa)) is the Radical SAM core domain. Arg-20 serves as a coordination point for GTP. Residues Cys-27 and Cys-31 each contribute to the [4Fe-4S] cluster site. Tyr-33 contributes to the S-adenosyl-L-methionine binding site. Cys-34 contacts [4Fe-4S] cluster. Residue Arg-69 participates in GTP binding. Gly-73 contacts S-adenosyl-L-methionine. Residue Thr-100 coordinates GTP. Ser-124 provides a ligand contact to S-adenosyl-L-methionine. Lys-161 is a GTP binding site. Met-195 contacts S-adenosyl-L-methionine. [4Fe-4S] cluster contacts are provided by Cys-260 and Cys-263. Residue 265–267 (RVR) coordinates GTP. Cys-277 contributes to the [4Fe-4S] cluster binding site.

This sequence belongs to the radical SAM superfamily. MoaA family. Monomer and homodimer. The cofactor is [4Fe-4S] cluster.

The enzyme catalyses GTP + AH2 + S-adenosyl-L-methionine = (8S)-3',8-cyclo-7,8-dihydroguanosine 5'-triphosphate + 5'-deoxyadenosine + L-methionine + A + H(+). It functions in the pathway cofactor biosynthesis; molybdopterin biosynthesis. In terms of biological role, catalyzes the cyclization of GTP to (8S)-3',8-cyclo-7,8-dihydroguanosine 5'-triphosphate. This is GTP 3',8-cyclase from Pseudomonas entomophila (strain L48).